We begin with the raw amino-acid sequence, 192 residues long: Probable apo-citrate lyase phosphoribosyl-dephospho-CoA transferase (192 aa).

The protein belongs to the CitX family.

The catalysed reaction is apo-[citrate lyase ACP] + 2'-(5''-triphospho-alpha-D-ribosyl)-3'-dephospho-CoA = holo-[citrate lyase ACP] + diphosphate. Functionally, transfers 2-(5''-triphosphoribosyl)-3'-dephosphocoenzyme-A on a serine residue to the apo-acyl carrier protein (gamma chain) of the citrate lyase to yield holo-acyl carrier protein. In Streptococcus pyogenes serotype M3 (strain ATCC BAA-595 / MGAS315), this protein is Probable apo-citrate lyase phosphoribosyl-dephospho-CoA transferase.